The sequence spans 71 residues: Phosphatidylinositol N-acetylglucosaminyltransferase subunit Y (71 aa).

At Met1–Leu3 the chain is on the cytoplasmic side. Residues Ser4 to Val26 form a helical membrane-spanning segment. Over Glu27–Ser44 the chain is Lumenal. A helical membrane pass occupies residues Leu45–Ile65. Topologically, residues Lys66–Asn71 are cytoplasmic.

In terms of assembly, component of the glycosylphosphatidylinositol-N-acetylglucosaminyltransferase (GPI-GnT) complex composed at least by PIGA, PIGC, PIGH, PIGP, PIGQ, PIGY and DPM2. Interacts directly with PIGA; this interaction regulates glycosylphosphatidylinositol-N-acetylglucosaminyltransferase activity. Does not interact with Ras proteins.

The protein resides in the endoplasmic reticulum membrane. The protein operates within glycolipid biosynthesis; glycosylphosphatidylinositol-anchor biosynthesis. Part of the glycosylphosphatidylinositol-N-acetylglucosaminyltransferase (GPI-GnT) complex that catalyzes the transfer of N-acetylglucosamine from UDP-N-acetylglucosamine to phosphatidylinositol and participates in the first step of GPI biosynthesis. May act by regulating the catalytic subunit PIGA. In Bos taurus (Bovine), this protein is Phosphatidylinositol N-acetylglucosaminyltransferase subunit Y.